Consider the following 396-residue polypeptide: 1-deoxy-D-xylulose 5-phosphate reductoisomerase (396 aa).

Residues threonine 10, glycine 11, serine 12, isoleucine 13, glycine 36, lysine 37, asparagine 38, and asparagine 124 each contribute to the NADPH site. Lysine 125 provides a ligand contact to 1-deoxy-D-xylulose 5-phosphate. Residue glutamate 126 coordinates NADPH. Aspartate 150 contributes to the Mn(2+) binding site. 1-deoxy-D-xylulose 5-phosphate is bound by residues serine 151, glutamate 152, serine 186, and histidine 209. Glutamate 152 provides a ligand contact to Mn(2+). Residue glycine 215 coordinates NADPH. Positions 222, 227, 228, and 231 each coordinate 1-deoxy-D-xylulose 5-phosphate. Residue glutamate 231 coordinates Mn(2+).

The protein belongs to the DXR family. It depends on Mg(2+) as a cofactor. Mn(2+) is required as a cofactor.

The catalysed reaction is 2-C-methyl-D-erythritol 4-phosphate + NADP(+) = 1-deoxy-D-xylulose 5-phosphate + NADPH + H(+). Its pathway is isoprenoid biosynthesis; isopentenyl diphosphate biosynthesis via DXP pathway; isopentenyl diphosphate from 1-deoxy-D-xylulose 5-phosphate: step 1/6. In terms of biological role, catalyzes the NADPH-dependent rearrangement and reduction of 1-deoxy-D-xylulose-5-phosphate (DXP) to 2-C-methyl-D-erythritol 4-phosphate (MEP). The sequence is that of 1-deoxy-D-xylulose 5-phosphate reductoisomerase from Glaesserella parasuis serovar 5 (strain SH0165) (Haemophilus parasuis).